A 913-amino-acid polypeptide reads, in one-letter code: MQMFRHSSADMWRAKKPTLERRSTDGRRSSIVDWINGLSDNNNYKSDHWVEKHDEGCERMTRNGSVCAVEESEPDVPTQHREVLLTKLKIEIKNIMAEHGAKKYLNLNSPYVTSLCIAVDACIMDGLRRRLLTLFNSPSSMSLLQIIAKSNGPAQQVLDQTREIEELRTSAIPVHLIWIREALYLKSLSTIINHFIDSKSVRRYYDNSALLLDPVKGRLVATLMMAPCMVTYRRMSNRIEQEATAEELVEGATRGSTSTVPSRPPLSITRQVSSIAASVERNGSVSRDYVFSLHHSCKSTLLYGKNNVCVAMNGSDFAKGYMSLQKFYDGNLSLKWVPNQLMHASSQPSSGHSNNGEFTNIWKNTINIEMQDIIYIHLHQKDEISPTCLTFVNCEGVQSAPFQLPAGQHSIAFLSSLETGLAPLLRLDPPLWVGTTKEKILPRLRKRSTAVANPAMLDYVFRLVRTSGVEPAPEDIEDPLAPTSHSPPIHDNCVSLPNSPYIVDNVDSIVNFQIGTACQSMRNQIMARAFYGWLTYVRHLRTIRTHLLHLVDTKTLICDDDCDPVDEKFWKQARAEPTEENEKEFLKRVYWRGIEGINTKEVRRMAWPYLLGLFEWNESPESRLEQFTSQYWQDIEEWRVLEAEVRRRDEEAFRAARARKAASPVREESCDVFEDPNEPTCSQHYDRENLITLFRANLHRIDKDVERCDRNLMFFSNKDNLESLRRVMYTYVRRNLEEGYTQGMCDLLAPLLVTFEDEALTLECFSLLMLRQRGKFPQRPGMSKCLLNLRSLIQVVDPQIYALISDIDYAQALSFAFRWFLLDFKRELSYECTYKVWEVIWAAQRLRITDDFAIFFGLATITNYHDVLITNNFDYTDMIKFFNEMAERHDCSRLLSSARTHVKCLQNLVQHLK.

The tract at residues 1 to 24 (MQMFRHSSADMWRAKKPTLERRST) is disordered. In terms of domain architecture, RUN spans 106-240 (NLNSPYVTSL…TYRRMSNRIE (135 aa)). Residues 597–844 (INTKEVRRMA…KVWEVIWAAQ (248 aa)) enclose the Rab-GAP TBC domain.

Belongs to the RUTBC family. In terms of assembly, interacts with rab-19. Interacts with ric-19; the interaction is direct and may be required for the activation of rab-2 and dense vesicle maturation in cholinergic motoneurons. Interacts (via RUN domain) with rund-1. Does not interact with unc-108 (GTP-bound form). As to expression, expressed in neurons in the head, tail and ventral nerve cord (at protein level).

The protein resides in the golgi apparatus. Its subcellular location is the trans-Golgi network. It is found in the early endosome. The protein localises to the cytoplasmic vesicle membrane. Interacts with numerous Rab family members, functioning as Rab effector for some, and as GTPase activator for others. GTPase activator for rab-2. In association with ric-19 activates rab-2 during dense core vesicle maturation in cholinergic motoneurons. The protein is Rab GTPase-activating protein tbc-8 of Caenorhabditis elegans.